Here is a 503-residue protein sequence, read N- to C-terminus: Probable mitochondrial-processing peptidase subunit alpha-1, mitochondrial (503 aa).

The N-terminal 59 residues, 1–59 (MYRTAASRARALKGVLTRSLRPARYASSSAVAETSSSTPAYLSWLSGGSRAALTSLDMP), are a transit peptide targeting the mitochondrion.

It belongs to the peptidase M16 family. Heterodimer of alpha and beta subunits, forming the mitochondrial processing protease (MPP) in which subunit alpha is involved in substrate recognition and binding and subunit beta is the catalytic subunit. Component of the ubiquinol-cytochrome c oxidoreductase (cytochrome b-c1 complex, complex III, CIII), a multisubunit enzyme composed of 10 subunits. The complex is composed of 3 respiratory subunits cytochrome b (MT-CYB), cytochrome c1 (CYC1-1 or CYC1-2) and Rieske protein (UCR1-1 or UCR1-2), 2 core protein subunits MPPalpha1 (or MPPalpha2) and MPPB, and 5 low-molecular weight protein subunits QCR7-1 (or QCR7-2), UCRQ-1 (or UCRQ-2), QCR9, UCRY and probably QCR6-1 (or QCR6-2). The complex exists as an obligatory dimer and forms supercomplexes (SCs) in the inner mitochondrial membrane with NADH-ubiquinone oxidoreductase (complex I, CI), resulting in different assemblies (supercomplexes SCI(1)III(2) and SCI(2)III(4)).

The protein resides in the mitochondrion matrix. It is found in the mitochondrion inner membrane. Functionally, substrate recognition and binding subunit of the essential mitochondrial processing protease (MPP), which cleaves the mitochondrial sequence off newly imported precursors proteins. Its function is as follows. Component of the ubiquinol-cytochrome c oxidoreductase, a multisubunit transmembrane complex that is part of the mitochondrial electron transport chain which drives oxidative phosphorylation. The respiratory chain contains 3 multisubunit complexes succinate dehydrogenase (complex II, CII), ubiquinol-cytochrome c oxidoreductase (cytochrome b-c1 complex, complex III, CIII) and cytochrome c oxidase (complex IV, CIV), that cooperate to transfer electrons derived from NADH and succinate to molecular oxygen, creating an electrochemical gradient over the inner membrane that drives transmembrane transport and the ATP synthase. The cytochrome b-c1 complex catalyzes electron transfer from ubiquinol to cytochrome c, linking this redox reaction to translocation of protons across the mitochondrial inner membrane, with protons being carried across the membrane as hydrogens on the quinol. In the process called Q cycle, 2 protons are consumed from the matrix, 4 protons are released into the intermembrane space and 2 electrons are passed to cytochrome c. The polypeptide is Probable mitochondrial-processing peptidase subunit alpha-1, mitochondrial (MPPalpha1) (Arabidopsis thaliana (Mouse-ear cress)).